The following is a 724-amino-acid chain: Outer spore wall protein 2 (724 aa).

Disordered stretches follow at residues 407–427 (NSGQ…KNRV) and 477–497 (TSGG…YDDK).

Its subcellular location is the cytoplasm. The protein localises to the prospore membrane. In terms of biological role, may be involved in a late step of spore wall assembly. The polypeptide is Outer spore wall protein 2 (OSW2) (Saccharomyces cerevisiae (strain ATCC 204508 / S288c) (Baker's yeast)).